The chain runs to 374 residues: Tryptophan--tRNA ligase (374 aa).

The 'HIGH' region motif lies at 81 to 89 (PSGPVHIGH). The 'KMSKS' region signature appears at 258 to 262 (KMSAS).

The protein belongs to the class-I aminoacyl-tRNA synthetase family.

The protein localises to the cytoplasm. The enzyme catalyses tRNA(Trp) + L-tryptophan + ATP = L-tryptophyl-tRNA(Trp) + AMP + diphosphate + H(+). This Pyrobaculum calidifontis (strain DSM 21063 / JCM 11548 / VA1) protein is Tryptophan--tRNA ligase.